The primary structure comprises 241 residues: Glucosamine-6-phosphate deaminase (241 aa).

Aspartate 67 acts as the Proton acceptor; for enolization step in catalysis. Catalysis depends on asparagine 136, which acts as the For ring-opening step. Residue histidine 138 is the Proton acceptor; for ring-opening step of the active site. Glutamate 143 serves as the catalytic For ring-opening step.

The protein belongs to the glucosamine/galactosamine-6-phosphate isomerase family. NagB subfamily.

It carries out the reaction alpha-D-glucosamine 6-phosphate + H2O = beta-D-fructose 6-phosphate + NH4(+). It participates in amino-sugar metabolism; N-acetylneuraminate degradation; D-fructose 6-phosphate from N-acetylneuraminate: step 5/5. Its function is as follows. Catalyzes the reversible isomerization-deamination of glucosamine 6-phosphate (GlcN6P) to form fructose 6-phosphate (Fru6P) and ammonium ion. This Clostridium acetobutylicum (strain ATCC 824 / DSM 792 / JCM 1419 / IAM 19013 / LMG 5710 / NBRC 13948 / NRRL B-527 / VKM B-1787 / 2291 / W) protein is Glucosamine-6-phosphate deaminase.